The sequence spans 579 residues: V-type ATP synthase alpha chain (579 aa).

Residue 227 to 234 (GGFGTGKT) participates in ATP binding.

This sequence belongs to the ATPase alpha/beta chains family.

The enzyme catalyses ATP + H2O + 4 H(+)(in) = ADP + phosphate + 5 H(+)(out). Produces ATP from ADP in the presence of a proton gradient across the membrane. The V-type alpha chain is a catalytic subunit. This chain is V-type ATP synthase alpha chain, found in Anaeromyxobacter dehalogenans (strain 2CP-C).